We begin with the raw amino-acid sequence, 414 residues long: Arrestin domain-containing protein 3 (414 aa).

2 consecutive short sequence motifs (PPxY motif) follow at residues 346-349 (PPSY) and 391-394 (PPLY). A disordered region spans residues 393 to 414 (LYSEIDPNPDQSSEDRPSCPSR). Residues 405-414 (SEDRPSCPSR) are compositionally biased toward basic and acidic residues.

This sequence belongs to the arrestin family. As to quaternary structure, interacts (via PPxY motifs) with NEDD4 (via WW domains). Interacts with ADRB2. Interacts with ADRB3. Interacts with HGS (via PPxY motifs). Does not bind TXN (thioredoxin). Interacts with ITCH. As to expression, detected in visceral fat, subcutaneous fat, brown fat and skeletal muscle, and at lower levels in kidney.

The protein localises to the cytoplasm. It is found in the cell membrane. The protein resides in the lysosome. Its subcellular location is the endosome. It localises to the early endosome. Functionally, adapter protein that plays a role in regulating cell-surface expression of adrenergic receptors and probably also other G protein-coupled receptors. Plays a role in NEDD4-mediated ubiquitination and endocytosis af activated ADRB2 and subsequent ADRB2 degradation. May recruit NEDD4 to ADRB2. Alternatively, may function as adapter protein that does not play a major role in recruiting NEDD4 to ADRB2, but rather plays a role in a targeting ADRB2 to endosomes. This chain is Arrestin domain-containing protein 3 (Arrdc3), found in Mus musculus (Mouse).